A 997-amino-acid chain; its full sequence is MQEKKTLYLLDAYGLIYRSYHAFARAPLINDSGANVSAVYGFFRSLHTLLCHYRPRYFVAVFDSLTPTFRHVQYPAYKAKRDKTSAELYAQIPLIEEILCALGITVLRHDGFEADDLIATLAKRVAAEHCHVVIISSDKDVLQLVCDTVQVLRLDIDHKWTCCDAAYVQQRWTVMPTQLLDLFSLMGDSSDNVPGVRGIGPKTAAHLLHCFGTLDGIYRHTYSLKEALRTKIVCGKKDAFFSRSLIELRDDVPCVFSLEDSCCIPLDVTSAARIFVREGLHALAQQYRACVQEIDTEATNDTLQMTESSVLTSGRCANECFLSQVEGRASTPEVNSVLKSELKTSAVSGAIPIENRDLRQDVMLARSAGHYRGVTDPVELKRIIDCACANGVVAFDCETDGLHPHDTRLVGFSICFQEAEAFYVPLIVPDVSLHTESTQCTCARSTNVETEKECTEQHGVSASAVQDPAYVQAVMHQLRRLWNDETLTLVMHNGKFDYHVMHRAGVFEHCACNIFDTMVAAWLLDPDRGTYGMDVLAASFFQIRTITFEEVVAKGQTFAHVPYECAVRYAAEDADITFRLYHYLKLRLETAGLLSVFETIEMPLLPILARMEEVGIFLRKDVVQQLTRSFSDLIQQYEHDIFSLAGHEFNIGSPKQLQTVLFQELHLPPGKKNTQGYSTDHSVLKKLARKHPIAEKILLFRDLSKLRSTYTESLAKLADQTGRVHTSFVQIGTATGRLSSRNPNLQNIPIKSTEGRKIRQAFQATVGHELISADYTQIELVVLAHLSQDRNLLNAFRQHIDIHALTAAYIFNVSIDDVQPAMRRIAKTINFGIVYGMSAFRLSDELKISQKEAQSFIYRYFETYPGVYAFSTQVAEQTRKTGYVTSLAGRRRYIRTIDSRNTLERARAERMALNTQIQSSAADIVKIAMIAIQRAFARRPLRAQLLLQVHDELIFEAPAAETAIVKEILFAEMEHAVELSIPLRIHVESGNSWGDFH.

The 88-residue stretch at 174 to 261 (VMPTQLLDLF…VPCVFSLEDS (88 aa)) folds into the 5'-3' exonuclease domain. Residues 428 to 589 (VPDVSLHTES…LYHYLKLRLE (162 aa)) enclose the 3'-5' exonuclease domain.

This sequence belongs to the DNA polymerase type-A family.

The enzyme catalyses DNA(n) + a 2'-deoxyribonucleoside 5'-triphosphate = DNA(n+1) + diphosphate. Its function is as follows. In addition to polymerase activity, this DNA polymerase exhibits 3'-5' and 5'-3' exonuclease activity. The protein is DNA polymerase I (polA) of Treponema pallidum (strain Nichols).